Consider the following 493-residue polypeptide: Endoglucanase 23 (493 aa).

The first 23 residues, 1 to 23 (MKASIYLVTVFILLLLLLPTAIP), serve as a signal peptide directing secretion. Asp-78 acts as the Nucleophile in catalysis. Asn-297 carries N-linked (GlcNAc...) asparagine glycosylation. The active site involves His-410. A glycan (N-linked (GlcNAc...) asparagine) is linked at Asn-465. Residue Glu-470 is part of the active site.

It belongs to the glycosyl hydrolase 9 (cellulase E) family.

The protein localises to the secreted. The catalysed reaction is Endohydrolysis of (1-&gt;4)-beta-D-glucosidic linkages in cellulose, lichenin and cereal beta-D-glucans.. This Arabidopsis thaliana (Mouse-ear cress) protein is Endoglucanase 23.